The primary structure comprises 184 residues: Large ribosomal subunit protein uL5 (184 aa).

This sequence belongs to the universal ribosomal protein uL5 family. As to quaternary structure, part of the 50S ribosomal subunit; part of the 5S rRNA/L5/L18/L25 subcomplex. Contacts the 5S rRNA and the P site tRNA. Forms a bridge to the 30S subunit in the 70S ribosome.

Its function is as follows. This is one of the proteins that bind and probably mediate the attachment of the 5S RNA into the large ribosomal subunit, where it forms part of the central protuberance. In the 70S ribosome it contacts protein S13 of the 30S subunit (bridge B1b), connecting the 2 subunits; this bridge is implicated in subunit movement. Contacts the P site tRNA; the 5S rRNA and some of its associated proteins might help stabilize positioning of ribosome-bound tRNAs. This is Large ribosomal subunit protein uL5 from Pelagibacter ubique (strain HTCC1062).